Consider the following 89-residue polypeptide: Small ribosomal subunit protein uS15 (89 aa).

The protein belongs to the universal ribosomal protein uS15 family. Part of the 30S ribosomal subunit. Forms a bridge to the 50S subunit in the 70S ribosome, contacting the 23S rRNA.

In terms of biological role, one of the primary rRNA binding proteins, it binds directly to 16S rRNA where it helps nucleate assembly of the platform of the 30S subunit by binding and bridging several RNA helices of the 16S rRNA. Forms an intersubunit bridge (bridge B4) with the 23S rRNA of the 50S subunit in the ribosome. This chain is Small ribosomal subunit protein uS15, found in Shewanella amazonensis (strain ATCC BAA-1098 / SB2B).